A 222-amino-acid polypeptide reads, in one-letter code: Transcriptional regulatory protein PmrA (222 aa).

The Response regulatory domain occupies 2–116 (KLLIVEDDKL…ELQARVRALI (115 aa)). Residue aspartate 51 is modified to 4-aspartylphosphate. Residues 124–218 (NSKIQVDNIT…LRGFGYLLTK (95 aa)) constitute a DNA-binding region (ompR/PhoB-type).

Post-translationally, phosphorylated by PmrB.

Its subcellular location is the cytoplasm. In terms of biological role, member of the two-component regulatory system PmrB/PmrA involved in regulation of virulence. Unphosphorylated PmrA represses extracellular enzyme genes. Phosphorylation of PmrA by PmrB relieves such repression, which leads to activation of extracellular enzyme genes. Phosphorylated PmrA seems to repress expression of the pmrCAB operon. In Pectobacterium parmentieri, this protein is Transcriptional regulatory protein PmrA (pmrA).